The sequence spans 254 residues: Aspartate/glutamate leucyltransferase (254 aa).

It belongs to the R-transferase family. Bpt subfamily.

It localises to the cytoplasm. It carries out the reaction N-terminal L-glutamyl-[protein] + L-leucyl-tRNA(Leu) = N-terminal L-leucyl-L-glutamyl-[protein] + tRNA(Leu) + H(+). The catalysed reaction is N-terminal L-aspartyl-[protein] + L-leucyl-tRNA(Leu) = N-terminal L-leucyl-L-aspartyl-[protein] + tRNA(Leu) + H(+). Functions in the N-end rule pathway of protein degradation where it conjugates Leu from its aminoacyl-tRNA to the N-termini of proteins containing an N-terminal aspartate or glutamate. This chain is Aspartate/glutamate leucyltransferase, found in Xylella fastidiosa (strain 9a5c).